The following is a 113-amino-acid chain: Small ribosomal subunit protein bS6 (113 aa).

The protein belongs to the bacterial ribosomal protein bS6 family.

Binds together with bS18 to 16S ribosomal RNA. This chain is Small ribosomal subunit protein bS6, found in Ruthia magnifica subsp. Calyptogena magnifica.